We begin with the raw amino-acid sequence, 503 residues long: MDKITGFSDDELLVKILSFLPTKAAVTTSILSKQWKFLWMRLPKLEYHDDIKIYILYMRGGSRSRTDSILLEKSQRMWRFIDKNLPLHSSPVIESLRLTIYNELFQPESINLWVEIAVSRCVKELSVRFSPFKGKRDALLPTTLYTCKSLVTLKLRENILVDVPHVFCLPSLKTLHLSHVTYADEESLQRLLSNCFVLEDLVVERRVGDNVRNFAVIIPSLLSLSFEILGQCSSEEYVIHTPSLKYFKARDFGECSTCLILNMPKLEEVFVSTAGHNIKKLLESVTYVKRLSLFIPDNNAEAFTALYGDVIVFNQLEHLTFIIWEAYCSKLLYWLLIASPKLRNLEFNDQFSSDGMDTLVFWEQMITSVPQCLLSSLQTFKWLGNGDSIEGKDLATFILRNSCQLKTATISIGQGQNKLEIEKELLLHQNMDKISGISDDVLLVKILSFRPTKVAVSTSVLSKQWKYLRKRVLKLEYDDTECKTKPSKSSHKRFRCFVKRFCK.

Positions 2–50 (DKITGFSDDELLVKILSFLPTKAAVTTSILSKQWKFLWMRLPKLEYHDD) constitute an F-box domain. The FBD domain maps to 361 to 412 (FWEQMITSVPQCLLSSLQTFKWLGNGDSIEGKDLATFILRNSCQLKTATISI).

In Arabidopsis thaliana (Mouse-ear cress), this protein is Putative FBD-associated F-box protein At5g56410.